The primary structure comprises 563 residues: Lengsin (563 aa).

Positions 1 to 115 are disordered; it reads MTDEGDLAQE…PNTDPTRYNA (115 aa). Over residues 26–37 the composition is skewed to basic residues; that stretch reads SKLRRARRKVTK. 2 stretches are compositionally biased toward polar residues: residues 51–62 and 105–115; these read ANSSEMSRNQIA and SPNTDPTRYNA. The GS beta-grasp domain maps to 137-231; the sequence is NHLQFVRFEA…VICDTFTVTG (95 aa). The region spanning 238–563 is the GS catalytic domain; the sequence is PRYIAKRQLR…EGNKFLEYFI (326 aa).

This sequence belongs to the glutamine synthetase family. In terms of assembly, dodecamer. Interacts with BFSP2 and VIM. Expressed in lens.

Its function is as follows. May act as a component of the cytoskeleton or as a chaperone for the reorganization of intermediate filament proteins during terminal differentiation in the lens. Does not seem to have enzymatic activity. This chain is Lengsin (Lgsn), found in Mus musculus (Mouse).